The following is a 520-amino-acid chain: Cholesterol side-chain cleavage enzyme, mitochondrial (520 aa).

The transit peptide at 1 to 39 (MLARGLALRSVLVKGCQPFLSAPRECPGHPRVGTGEGAC) directs the protein to the mitochondrion. Cysteine 461 serves as a coordination point for heme.

This sequence belongs to the cytochrome P450 family. Interacts with FDX1/adrenodoxin. Requires heme as cofactor.

It localises to the mitochondrion inner membrane. It catalyses the reaction 6 reduced [adrenodoxin] + cholesterol + 3 O2 + 6 H(+) = 4-methylpentanal + pregnenolone + 6 oxidized [adrenodoxin] + 4 H2O. The catalysed reaction is 2 reduced [adrenodoxin] + cholesterol + O2 + 2 H(+) = (22R)-hydroxycholesterol + 2 oxidized [adrenodoxin] + H2O. The enzyme catalyses (22R)-hydroxycholesterol + 2 reduced [adrenodoxin] + O2 + 2 H(+) = (20R,22R)-20,22-dihydroxycholesterol + 2 oxidized [adrenodoxin] + H2O. It carries out the reaction (20R,22R)-20,22-dihydroxycholesterol + 2 reduced [adrenodoxin] + O2 + 2 H(+) = 4-methylpentanal + pregnenolone + 2 oxidized [adrenodoxin] + 2 H2O. It participates in lipid metabolism; C21-steroid hormone metabolism. Its pathway is steroid metabolism; cholesterol metabolism. A cytochrome P450 monooxygenase that catalyzes the side-chain hydroxylation and cleavage of cholesterol to pregnenolone, the precursor of most steroid hormones. Catalyzes three sequential oxidation reactions of cholesterol, namely the hydroxylation at C22 followed with the hydroxylation at C20 to yield 20R,22R-hydroxycholesterol that is further cleaved between C20 and C22 to yield the C21-steroid pregnenolone and 4-methylpentanal. Mechanistically, uses molecular oxygen inserting one oxygen atom into a substrate and reducing the second into a water molecule. Two electrons are provided by NADPH via a two-protein mitochondrial transfer system comprising flavoprotein FDXR (adrenodoxin/ferredoxin reductase) and nonheme iron-sulfur protein FDX1 or FDX2 (adrenodoxin/ferredoxin). This chain is Cholesterol side-chain cleavage enzyme, mitochondrial (CYP11A1), found in Sus scrofa (Pig).